Here is a 731-residue protein sequence, read N- to C-terminus: Catalase-peroxidase (731 aa).

The interval 1–24 is disordered; the sequence is MSTEPNCPFSGNARKHTAAGAPSN. Positions 96 to 219 form a cross-link, tryptophyl-tyrosyl-methioninium (Trp-Tyr) (with M-245); the sequence is WHSAGTYRVS…LGAVQMGLIY (124 aa). Histidine 97 functions as the Proton acceptor in the catalytic mechanism. Positions 219–245 form a cross-link, tryptophyl-tyrosyl-methioninium (Tyr-Met) (with W-96); the sequence is YVNPEGPNGNPDPIAAARDIRETFARM. Histidine 260 is a heme b binding site. The disordered stretch occupies residues 339-365; sequence GAQQWKPKGDAGAGTVPDAHDPSKRHA.

This sequence belongs to the peroxidase family. Peroxidase/catalase subfamily. In terms of assembly, homodimer or homotetramer. The cofactor is heme b. Post-translationally, formation of the three residue Trp-Tyr-Met cross-link is important for the catalase, but not the peroxidase activity of the enzyme.

The enzyme catalyses H2O2 + AH2 = A + 2 H2O. The catalysed reaction is 2 H2O2 = O2 + 2 H2O. Functionally, bifunctional enzyme with both catalase and broad-spectrum peroxidase activity. This Polaromonas sp. (strain JS666 / ATCC BAA-500) protein is Catalase-peroxidase.